Reading from the N-terminus, the 309-residue chain is Fe-S cluster assembly protein dre2 (309 aa).

Residues Met-1 to Val-132 are N-terminal SAM-like domain. The interval Pro-133 to Gln-195 is linker. Cys-207, Cys-216, Cys-219, and Cys-221 together coordinate [2Fe-2S] cluster. Residues Cys-207–Cys-221 are fe-S binding site A. Residues Cys-265, Cys-268, Cys-276, and Cys-279 each coordinate [4Fe-4S] cluster. 2 consecutive short sequence motifs (cx2C motif) follow at residues Cys-265–Cys-268 and Cys-276–Cys-279. The interval Cys-265–Cys-279 is fe-S binding site B.

Belongs to the anamorsin family. In terms of assembly, monomer. Interacts with TAH18. Interacts with MIA40. [2Fe-2S] cluster serves as cofactor. It depends on [4Fe-4S] cluster as a cofactor.

It localises to the cytoplasm. The protein resides in the mitochondrion intermembrane space. Component of the cytosolic iron-sulfur (Fe-S) protein assembly (CIA) machinery required for the maturation of extramitochondrial Fe-S proteins. Part of an electron transfer chain functioning in an early step of cytosolic Fe-S biogenesis, facilitating the de novo assembly of a [4Fe-4S] cluster on the scaffold complex CFD1-NBP35. Electrons are transferred to DRE2 from NADPH via the FAD- and FMN-containing protein TAH18. TAH18-DRE2 are also required for the assembly of the diferric tyrosyl radical cofactor of ribonucleotide reductase (RNR), probably by providing electrons for reduction during radical cofactor maturation in the catalytic small subunit RNR2. This Schizosaccharomyces japonicus (strain yFS275 / FY16936) (Fission yeast) protein is Fe-S cluster assembly protein dre2.